The primary structure comprises 743 residues: Alpha-N-acetylglucosaminidase (743 aa).

The N-terminal stretch at 1-23 is a signal peptide; sequence MEAVAVAAAVGVLLLAGAGGAAG. N-linked (GlcNAc...) asparagine glycosylation is found at Asn-261, Asn-272, Asn-435, Asn-503, Asn-526, and Asn-532.

It belongs to the glycosyl hydrolase 89 family. In terms of assembly, monomer and homodimer. Liver, ovary, peripheral blood leukocytes, testis, prostate, spleen, colon, lung, placenta and kidney.

Its subcellular location is the lysosome. It carries out the reaction Hydrolysis of terminal non-reducing N-acetyl-D-glucosamine residues in N-acetyl-alpha-D-glucosaminides.. Involved in the degradation of heparan sulfate. This is Alpha-N-acetylglucosaminidase (NAGLU) from Homo sapiens (Human).